A 426-amino-acid polypeptide reads, in one-letter code: MAPAASELKLGKKVNEGKTKEVYELPDIPGCVLMQSKDQITAGNAARKDRMEGKAAISNTTTSCVFQLLQEAGIKTAFVRKQSDTAFIAAHCEMIPIEWVCRRIATGSFLKRNPGVKEGYKFYPPKIEMFYKDDANNDPQWSEEQLIEAKFSFAGLTIGKTEVDIMARSTQAIFEILEKSWQPQNCTLVDLKIEFGVNILTKEIVLADVIDNDSWRLWPSGDRSQQKDKQSYRDLKEVTPEALQMVKRNFEWVAERVELLLKTKSQGRVVVLMGSTSDLGHCEKIKKACATFGIPCELRVTSAHKGPDETLRIKAEYEGDGIPTVFVAVAGRSNGLGPVMSGNTAYPVVNCPPLSSDWGAQDVWSSLRLPSGLGCPTTLSPEGAAQFAAQIFGLNNHLVWAKLRSNMLNTWISLKQADKKLRECTL.

The tract at residues 1–261 is SAICAR synthetase; sequence MAPAASELKL…WVAERVELLL (261 aa). Residues 262 to 426 are AIR carboxylase; that stretch reads KTKSQGRVVV…ADKKLRECTL (165 aa).

The protein in the N-terminal section; belongs to the SAICAR synthetase family. In the C-terminal section; belongs to the AIR carboxylase family. Class II subfamily. In terms of assembly, homooctamer.

It carries out the reaction 5-amino-1-(5-phospho-D-ribosyl)imidazole-4-carboxylate + L-aspartate + ATP = (2S)-2-[5-amino-1-(5-phospho-beta-D-ribosyl)imidazole-4-carboxamido]succinate + ADP + phosphate + 2 H(+). The enzyme catalyses 5-amino-1-(5-phospho-D-ribosyl)imidazole-4-carboxylate + H(+) = 5-amino-1-(5-phospho-beta-D-ribosyl)imidazole + CO2. It participates in purine metabolism; IMP biosynthesis via de novo pathway; 5-amino-1-(5-phospho-D-ribosyl)imidazole-4-carboxamide from 5-amino-1-(5-phospho-D-ribosyl)imidazole-4-carboxylate: step 1/2. Its pathway is purine metabolism; IMP biosynthesis via de novo pathway; 5-amino-1-(5-phospho-D-ribosyl)imidazole-4-carboxylate from 5-amino-1-(5-phospho-D-ribosyl)imidazole (carboxylase route): step 1/1. The polypeptide is Multifunctional protein ADE2 (AIRC) (Gallus gallus (Chicken)).